The sequence spans 395 residues: MLRWQTAGESHGEALVAMIEGLPAGVRISTDDIVSALARRRLGYGRGARMKFEQDKVRLLTGVRHGLTLGSPVAIEIANTEWPKWTEVMSADALDHDLPREGRNAPLSRPRPGHADLTGMRKYGFDDARPVLERSSARETASRVALGEVAKQFLDQAFGIRTVAHVVALGGVQTNPDLPLPTPDDLEALDASPVRTLDKEAEVRIIERINEAKKAADTLGGVIEVLAYGVPAGIGTYVESDRRLDAALASAIMGIQAFKGVEIGDGFLAASRPGSQAHDEIVVNADGRIDRLSNRAGGIEGGMSNGQVIRVRGAMKPIPSIPKALRTVDVLTGESAQAINQRSDSTAVPAASVVAEAMVRLTLAKYALDKFGGDSVAETRRNLESYLASWPEHMR.

NADP(+) is bound by residues Arg-40 and Arg-46. The disordered stretch occupies residues 98–120; that stretch reads LPREGRNAPLSRPRPGHADLTGM. Residues 134–136, 256–257, Gly-301, 316–320, and Arg-342 contribute to the FMN site; these read RSS, QA, and KPIPS.

It belongs to the chorismate synthase family. In terms of assembly, homotetramer. It depends on FMNH2 as a cofactor.

It carries out the reaction 5-O-(1-carboxyvinyl)-3-phosphoshikimate = chorismate + phosphate. The protein operates within metabolic intermediate biosynthesis; chorismate biosynthesis; chorismate from D-erythrose 4-phosphate and phosphoenolpyruvate: step 7/7. In terms of biological role, catalyzes the anti-1,4-elimination of the C-3 phosphate and the C-6 proR hydrogen from 5-enolpyruvylshikimate-3-phosphate (EPSP) to yield chorismate, which is the branch point compound that serves as the starting substrate for the three terminal pathways of aromatic amino acid biosynthesis. This reaction introduces a second double bond into the aromatic ring system. This chain is Chorismate synthase, found in Bifidobacterium longum subsp. infantis (strain ATCC 15697 / DSM 20088 / JCM 1222 / NCTC 11817 / S12).